A 327-amino-acid chain; its full sequence is Ribosomal RNA small subunit methyltransferase H (327 aa).

S-adenosyl-L-methionine-binding positions include 36–38 (GGH), Asp-61, Phe-88, Asp-114, and Gln-121.

The protein belongs to the methyltransferase superfamily. RsmH family.

The protein localises to the cytoplasm. It catalyses the reaction cytidine(1402) in 16S rRNA + S-adenosyl-L-methionine = N(4)-methylcytidine(1402) in 16S rRNA + S-adenosyl-L-homocysteine + H(+). Specifically methylates the N4 position of cytidine in position 1402 (C1402) of 16S rRNA. The chain is Ribosomal RNA small subunit methyltransferase H from Chlorobium luteolum (strain DSM 273 / BCRC 81028 / 2530) (Pelodictyon luteolum).